Consider the following 102-residue polypeptide: Large ribosomal subunit protein bL21 (102 aa).

This sequence belongs to the bacterial ribosomal protein bL21 family. As to quaternary structure, part of the 50S ribosomal subunit. Contacts protein L20.

This protein binds to 23S rRNA in the presence of protein L20. The chain is Large ribosomal subunit protein bL21 from Geobacter sulfurreducens (strain ATCC 51573 / DSM 12127 / PCA).